The following is a 302-amino-acid chain: Sulfate adenylyltransferase subunit 2 (302 aa).

This sequence belongs to the PAPS reductase family. CysD subfamily. As to quaternary structure, heterodimer composed of CysD, the smaller subunit, and CysN.

The catalysed reaction is sulfate + ATP + H(+) = adenosine 5'-phosphosulfate + diphosphate. Its pathway is sulfur metabolism; hydrogen sulfide biosynthesis; sulfite from sulfate: step 1/3. In terms of biological role, with CysN forms the ATP sulfurylase (ATPS) that catalyzes the adenylation of sulfate producing adenosine 5'-phosphosulfate (APS) and diphosphate, the first enzymatic step in sulfur assimilation pathway. APS synthesis involves the formation of a high-energy phosphoric-sulfuric acid anhydride bond driven by GTP hydrolysis by CysN coupled to ATP hydrolysis by CysD. The polypeptide is Sulfate adenylyltransferase subunit 2 (Shewanella pealeana (strain ATCC 700345 / ANG-SQ1)).